A 134-amino-acid chain; its full sequence is Small ribosomal subunit protein bS16 (134 aa).

The disordered stretch occupies residues 81 to 134; sequence LAKRPARSNPKKAEPGKKAQERLAAARQAEEEAKAAAEAAAAAPAEAPAEEAAS. Residues 91 to 101 show a composition bias toward basic and acidic residues; it reads KKAEPGKKAQE. Residues 116–134 are compositionally biased toward low complexity; that stretch reads AAEAAAAAPAEAPAEEAAS.

Belongs to the bacterial ribosomal protein bS16 family.

This chain is Small ribosomal subunit protein bS16, found in Chelativorans sp. (strain BNC1).